A 230-amino-acid polypeptide reads, in one-letter code: Ribose-5-phosphate isomerase A (230 aa).

Substrate is bound by residues Thr31 to Thr34, Asp88 to Asp91, and Lys101 to Gly104. The active-site Proton acceptor is Glu110. Lys128 is a binding site for substrate.

It belongs to the ribose 5-phosphate isomerase family. As to quaternary structure, homodimer.

It catalyses the reaction aldehydo-D-ribose 5-phosphate = D-ribulose 5-phosphate. The protein operates within carbohydrate degradation; pentose phosphate pathway; D-ribose 5-phosphate from D-ribulose 5-phosphate (non-oxidative stage): step 1/1. In terms of biological role, catalyzes the reversible conversion of ribose-5-phosphate to ribulose 5-phosphate. The chain is Ribose-5-phosphate isomerase A from Lactobacillus acidophilus (strain ATCC 700396 / NCK56 / N2 / NCFM).